The following is a 389-amino-acid chain: Large envelope protein (389 aa).

M1 carries the N-acetylmethionine modification. Residue G2 is the site of N-myristoyl glycine; by host attachment. The segment at 2-108 (GQNLSTSNPL…PPLRDTHPQA (107 aa)) is pre-S1. The pre-S stretch occupies residues 2–163 (GQNLSTSNPL…FSRTGDPAPN (162 aa)). Residues 2–170 (GQNLSTSNPL…APNMESITSG (169 aa)) lie on the Virion surface; in external conformation side of the membrane. The Intravirion; in internal conformation portion of the chain corresponds to 2 to 242 (GQNLSTSNPL…PGYRWMCLRR (241 aa)). The interval 73-99 (IITTVPANPPPASTNRQSGRKPTPISP) is disordered. The segment at 109–163 (MHWNSTTFHQALQDPRVRGLYFPAGGSSSGTAYPVPDTASHISSIFSRTGDPAPN) is pre-S2. The helical transmembrane segment at 171–191 (FLGPLLVLQAGFFLLTKILTI) threads the bilayer. The Intravirion; in external conformation portion of the chain corresponds to 192-242 (PQSLDSWWTSLNFLGGAPVCLGQNSQSPTSNHSPTSCPPICPGYRWMCLRR). The chain crosses the membrane as a helical span at residues 243-263 (FIIFLFILLLCLIFLLVLLDY). Over 264 to 337 (QGMLPVCPLI…WASVRFSWLS (74 aa)) the chain is Virion surface. N309 is a glycosylation site (N-linked (GlcNAc...) asparagine; by host). The helical transmembrane segment at 338–358 (LLAPFVQWFAGLSPTVWLSVI) threads the bilayer. Topologically, residues 359 to 364 (WMMWYW) are intravirion. The chain crosses the membrane as a helical span at residues 365–387 (GPNLYNILSPFIPLLPIFFCLWV). Over 388–389 (YI) the chain is Virion surface.

It belongs to the orthohepadnavirus major surface antigen family. In its internal form (Li-HBsAg), interacts with the capsid protein and with the isoform S. Interacts with host chaperone CANX. As to quaternary structure, associates with host chaperone CANX through its pre-S2 N glycan; this association may be essential for isoform M proper secretion. In terms of assembly, interacts with isoform L. Interacts with the antigens of satellite virus HDV (HDVAgs); this interaction is required for encapsidation of HDV genomic RNA. Isoform M is N-terminally acetylated by host at a ratio of 90%, and N-glycosylated by host at the pre-S2 region. Post-translationally, myristoylated.

Its subcellular location is the virion membrane. The large envelope protein exists in two topological conformations, one which is termed 'external' or Le-HBsAg and the other 'internal' or Li-HBsAg. In its external conformation the protein attaches the virus to cell receptors and thereby initiating infection. This interaction determines the species specificity and liver tropism. This attachment induces virion internalization predominantly through caveolin-mediated endocytosis. The large envelope protein also assures fusion between virion membrane and endosomal membrane. In its internal conformation the protein plays a role in virion morphogenesis and mediates the contact with the nucleocapsid like a matrix protein. Its function is as follows. The middle envelope protein plays an important role in the budding of the virion. It is involved in the induction of budding in a nucleocapsid independent way. In this process the majority of envelope proteins bud to form subviral lipoprotein particles of 22 nm of diameter that do not contain a nucleocapsid. This chain is Large envelope protein, found in Gorilla gorilla (western gorilla).